A 333-amino-acid chain; its full sequence is MASRKETPNGKTLDTPVKQIQIEGLVVMKIIKHYQEEGQGSEVVQGVLLGLVVEDQLEITNCFPFPQHTEDDADFDEVQYQMEMMRSLRHVNIDHLHVGWYQSTLYGSFVSRALLDSQFSYQHAIEESVVLIYDPIKTAQGSLCLKAYRLTPKLMEICKEKDFSSEGLKKASVGYEHMFEEVPIVIKNSHLINVLLWELEEKSTAADKHELLSLSSSSHLEKSLQMLMDRVDDMSQDIVKYNNYSRSLSKQQQQKHQYVQRRQQENAQRQSRGEPPLPEEDLTKMFKPPQPPPRMDTLLIASQINTYCQTIKEFTSQNLGKLFMAEALQGPSS.

One can recognise an MPN domain in the interval 20–154; that stretch reads IQIEGLVVMK…LKAYRLTPKL (135 aa). The segment at 249–295 is disordered; the sequence is SKQQQQKHQYVQRRQQENAQRQSRGEPPLPEEDLTKMFKPPQPPPRM. Positions 250–261 are enriched in low complexity; the sequence is KQQQQKHQYVQR.

This sequence belongs to the eIF-3 subunit H family. As to quaternary structure, component of the eukaryotic translation initiation factor 3 (eIF-3) complex, which is composed of 13 subunits: eif3a, eif3b, eif3c, eif3d, eif3e, eif3f, eif3g, eif3h, eif3i, eif3j, eif3k, eif3l and eif3m.

The protein resides in the cytoplasm. Its function is as follows. Component of the eukaryotic translation initiation factor 3 (eIF-3) complex, which is involved in protein synthesis of a specialized repertoire of mRNAs and, together with other initiation factors, stimulates binding of mRNA and methionyl-tRNAi to the 40S ribosome. The eIF-3 complex specifically targets and initiates translation of a subset of mRNAs involved in cell proliferation. The polypeptide is Eukaryotic translation initiation factor 3 subunit H-B (eif3hb) (Danio rerio (Zebrafish)).